Consider the following 353-residue polypeptide: E3 ubiquitin-protein ligase Os03g0188200 (353 aa).

Residues 48 to 68 (VVVLVALITAFVLLTVFSVLI) traverse the membrane as a helical segment. The RING-type; atypical zinc finger occupies 133-175 (CAVCLAEFADSDELRVLPACCHVFHPDCIDPWLAAAVTCPLCR). Basic and acidic residues-rich tracts occupy residues 308 to 318 (ADWDAGEEHGG) and 340 to 353 (GSKE…LNRV). Positions 308–353 (ADWDAGEEHGGSKRVHPVAGAQDETPSGSGSDGSKENSDSDALNRV) are disordered.

The protein resides in the membrane. The enzyme catalyses S-ubiquitinyl-[E2 ubiquitin-conjugating enzyme]-L-cysteine + [acceptor protein]-L-lysine = [E2 ubiquitin-conjugating enzyme]-L-cysteine + N(6)-ubiquitinyl-[acceptor protein]-L-lysine.. It functions in the pathway protein modification; protein ubiquitination. In terms of biological role, possesses E3 ubiquitin-protein ligase in vitro. The sequence is that of E3 ubiquitin-protein ligase Os03g0188200 from Oryza sativa subsp. japonica (Rice).